The sequence spans 345 residues: MSSFVPNKEQTRTVLIFCFHLKKTAAESHRMLVEAFGEQVPTVKKCERWFQRFKSGDFDVDDKEHGKPPKRYEDAELQALLDEDDAQTQKQLAEQLEVSQQAVSNRLREMGKIQKVGRWVPHELNERQMERRKNTCEILLSRYKRKSFLHRIVTGDEKWIFFVSPKRKKSYVDPGQPATSTARPNRFGKKTMLCVWWDQSGVIYYELLKRGETVNTARYQQQLINLNRALQRKRPEYQKRQHRVIFLHDNAPSHTARAVRDTLETLNWEVLPHAAYSPDLAPSDYHLFASMGHALAEQRFDSYESVKKWLDEWFAAKDDEFYWRGIHKLPERWEKCVASDGKYLE.

Positions 1 to 112 (MSSFVPNKEQ…VSNRLREMGK (112 aa)) are DNA-binding. 2 DNA-binding regions (H-T-H motif) span residues 24-55 (TAAESHRMLVEAFGEQVPTVKKCERWFQRFKS) and 89-110 (QKQLAEQLEVSQQAVSNRLREM). The segment at 113 to 125 (IQKVGRWVPHELN) is linker. The interval 126-345 (ERQMERRKNT…CVASDGKYLE (220 aa)) is catalytic. Residues Asp156, Asp249, and Asp284 each coordinate Mg(2+).

As to quaternary structure, homodimer. The complex has a trans arrangement, with each transposon end recognized by the DNA binding region of one transposase monomer and by the active site of the other monomer. It depends on Mg(2+) as a cofactor. Mn(2+) is required as a cofactor.

It localises to the nucleus. Its function is as follows. Mediates transposition of transposon Mos1 by a 'cut and paste' mechanism. Transposases are sequence-specific nucleases and strand transferases that catalyze transposition through an ordered series of events: sequence-specific binding of transposase to the terminal inverted repeats (IR) present at each end of the transposon, pairing of the transposon IRs in a paired-end complex (PEC), cleavage of one or both DNA strands at each transposon end, capture of target DNA, and strand transfer to insert the transposon at a new site. In Drosophila mauritiana (Fruit fly), this protein is Mariner Mos1 transposase (mariner\T).